Here is a 101-residue protein sequence, read N- to C-terminus: Small ribosomal subunit protein uS14 (101 aa).

Belongs to the universal ribosomal protein uS14 family. In terms of assembly, part of the 30S ribosomal subunit. Contacts proteins S3 and S10.

In terms of biological role, binds 16S rRNA, required for the assembly of 30S particles and may also be responsible for determining the conformation of the 16S rRNA at the A site. This is Small ribosomal subunit protein uS14 from Methylobacterium sp. (strain 4-46).